The sequence spans 250 residues: Ribosomal RNA small subunit methyltransferase G (250 aa).

Residues Gly78, Leu83, 129–130, and Arg144 each bind S-adenosyl-L-methionine; that span reads AE. The tract at residues 224 to 250 is disordered; sequence IAAPRKRGGQQRRAGHARGTSNRRRGT. Residues 227–250 show a composition bias toward basic residues; it reads PRKRGGQQRRAGHARGTSNRRRGT.

Belongs to the methyltransferase superfamily. RNA methyltransferase RsmG family.

The protein resides in the cytoplasm. In terms of biological role, specifically methylates the N7 position of guanine in position 518 of 16S rRNA. This chain is Ribosomal RNA small subunit methyltransferase G, found in Nocardioides sp. (strain ATCC BAA-499 / JS614).